Consider the following 278-residue polypeptide: Large ribosomal subunit protein uL2 (278 aa).

Disordered stretches follow at residues 33 to 53 and 219 to 278; these read LTEG…TSRG and LTRG…KKKR. The segment covering 269-278 has biased composition (basic residues); sequence IRSRHAKKKR.

It belongs to the universal ribosomal protein uL2 family. As to quaternary structure, part of the 50S ribosomal subunit. Forms a bridge to the 30S subunit in the 70S ribosome.

Its function is as follows. One of the primary rRNA binding proteins. Required for association of the 30S and 50S subunits to form the 70S ribosome, for tRNA binding and peptide bond formation. It has been suggested to have peptidyltransferase activity; this is somewhat controversial. Makes several contacts with the 16S rRNA in the 70S ribosome. This Sphingopyxis alaskensis (strain DSM 13593 / LMG 18877 / RB2256) (Sphingomonas alaskensis) protein is Large ribosomal subunit protein uL2.